The primary structure comprises 193 residues: NADH-quinone oxidoreductase subunit B (193 aa).

[4Fe-4S] cluster contacts are provided by Cys-72, Cys-73, Cys-137, and Cys-167.

Belongs to the complex I 20 kDa subunit family. As to quaternary structure, NDH-1 is composed of 14 different subunits. Subunits NuoB, C, D, E, F, and G constitute the peripheral sector of the complex. [4Fe-4S] cluster serves as cofactor.

It is found in the cell inner membrane. The catalysed reaction is a quinone + NADH + 5 H(+)(in) = a quinol + NAD(+) + 4 H(+)(out). Its function is as follows. NDH-1 shuttles electrons from NADH, via FMN and iron-sulfur (Fe-S) centers, to quinones in the respiratory chain. Couples the redox reaction to proton translocation (for every two electrons transferred, four hydrogen ions are translocated across the cytoplasmic membrane), and thus conserves the redox energy in a proton gradient. The protein is NADH-quinone oxidoreductase subunit B of Brucella abortus (strain S19).